A 263-amino-acid chain; its full sequence is MTHPQPFIAVIPARLASTRLPNKPLADVGGKPMVVRVAERAREAGAQQVLVASDTQAVLDAARDHGFDALLTRADHPSGTDRLAEVAARFGWRDDTVVVNVQGDEPLIDPTLVRDVASHLAAHPDCAIATAAHPIHDAADVFNPNVVKVALDARSVAMYFSRAPIPWSRDAYQPHWPDVAAMPAPAFPVYRHIGLYAYRARFLRTYPSLAQAPIEQAEQLEQLRAMWHGERIAVLITERAPEAGVDTPADLARVQALFRPSSK.

Belongs to the KdsB family.

Its subcellular location is the cytoplasm. It catalyses the reaction 3-deoxy-alpha-D-manno-oct-2-ulosonate + CTP = CMP-3-deoxy-beta-D-manno-octulosonate + diphosphate. It functions in the pathway nucleotide-sugar biosynthesis; CMP-3-deoxy-D-manno-octulosonate biosynthesis; CMP-3-deoxy-D-manno-octulosonate from 3-deoxy-D-manno-octulosonate and CTP: step 1/1. It participates in bacterial outer membrane biogenesis; lipopolysaccharide biosynthesis. Its function is as follows. Activates KDO (a required 8-carbon sugar) for incorporation into bacterial lipopolysaccharide in Gram-negative bacteria. The chain is 3-deoxy-manno-octulosonate cytidylyltransferase from Burkholderia vietnamiensis (strain G4 / LMG 22486) (Burkholderia cepacia (strain R1808)).